The chain runs to 87 residues: UPF0335 protein Avi_3695 (87 aa).

It belongs to the UPF0335 family.

The chain is UPF0335 protein Avi_3695 from Allorhizobium ampelinum (strain ATCC BAA-846 / DSM 112012 / S4) (Agrobacterium vitis (strain S4)).